A 181-amino-acid polypeptide reads, in one-letter code: HGPRTase-like protein 2 (181 aa).

The protein belongs to the purine/pyrimidine phosphoribosyltransferase family. Archaeal HPRT subfamily.

Functionally, may catalyze a purine salvage reaction, the substrate is unknown. The sequence is that of HGPRTase-like protein 2 from Haloterrigena turkmenica (strain ATCC 51198 / DSM 5511 / JCM 9101 / NCIMB 13204 / VKM B-1734 / 4k) (Halococcus turkmenicus).